The following is a 393-amino-acid chain: Envelope glycoprotein D (393 aa).

An N-terminal signal peptide occupies residues 1-25 (MGGAAARLGAVILFVVIVGLHGVRG). Positions 25-57 (GKYALADASLKMADPNRFRGKDLPVLDQLTDPP) are interaction with TNFRSF14. The Virion surface portion of the chain corresponds to 26–338 (KYALADASLK…PYHPPATPNN (313 aa)). His-64 lines the Zn(2+) pocket. 3 disulfide bridges follow: Cys-90–Cys-213, Cys-130–Cys-226, and Cys-142–Cys-151. N-linked (GlcNAc...) asparagine; by host glycans are attached at residues Asn-118 and Asn-145. A Zn(2+)-binding site is contributed by Asp-239. The profusion stretch occupies residues 260-304 (LKIAGWHGPRAPYTSTLLPPELPETPNATQPELAPEDPEDSALLE). The tract at residues 273-300 (TSTLLPPELPETPNATQPELAPEDPEDS) is disordered. Asn-286 carries N-linked (GlcNAc...) asparagine; by host glycosylation. Residues 339 to 363 (MGLIAGAVGGSLLAALVICGIVYWM) form a helical membrane-spanning segment. Residues 364–393 (RRRTRKAPKRIRLPHIREDDQPSSHQPLFY) lie on the Intravirion side of the membrane.

The protein belongs to the herpesviridae glycoprotein D family. In terms of assembly, homodimer. Interacts with host receptor TNFRSF14. Interacts with host receptor NECTIN1. Interacts (via profusion domain) with gB; this interaction occurs in the absence of gH/gL. Interacts (via profusion domain) with gH/gL heterodimer; this interaction occurs in the absence of gB. Associates with the gB-gH/gL-gD complex. Interacts (via C-terminus) with UL11 tegument protein. Interacts with host RSAD2.

It is found in the virion membrane. The protein resides in the host Golgi apparatus. Functionally, envelope glycoprotein that binds to the host cell entry receptors NECTIN1, TNFRSF14/HVEM and 3-O-sulfated heparan sulfate, promoting the virus entry into host cells. May trigger fusion with host membrane, by recruiting the fusion machinery composed of gB and gH/gL. This chain is Envelope glycoprotein D (gD), found in Homo sapiens (Human).